A 122-amino-acid chain; its full sequence is Large ribosomal subunit protein bL17 (122 aa).

This sequence belongs to the bacterial ribosomal protein bL17 family. Part of the 50S ribosomal subunit. Contacts protein L32.

This chain is Large ribosomal subunit protein bL17, found in Wigglesworthia glossinidia brevipalpis.